Reading from the N-terminus, the 138-residue chain is ATP synthase epsilon chain (138 aa).

This sequence belongs to the ATPase epsilon chain family. In terms of assembly, F-type ATPases have 2 components, CF(1) - the catalytic core - and CF(0) - the membrane proton channel. CF(1) has five subunits: alpha(3), beta(3), gamma(1), delta(1), epsilon(1). CF(0) has three main subunits: a, b and c.

The protein localises to the cellular thylakoid membrane. Functionally, produces ATP from ADP in the presence of a proton gradient across the membrane. In Synechococcus sp. (strain PCC 6716), this protein is ATP synthase epsilon chain (atpC).